The sequence spans 216 residues: tRNA (guanine-N(7)-)-methyltransferase (216 aa).

4 residues coordinate S-adenosyl-L-methionine: E43, D68, N95, and N117. Substrate-binding positions include D153 and 190–193 (TEYE).

It belongs to the class I-like SAM-binding methyltransferase superfamily. TrmB family.

It carries out the reaction guanosine(46) in tRNA + S-adenosyl-L-methionine = N(7)-methylguanosine(46) in tRNA + S-adenosyl-L-homocysteine. It participates in tRNA modification; N(7)-methylguanine-tRNA biosynthesis. Catalyzes the formation of N(7)-methylguanine at position 46 (m7G46) in tRNA. The protein is tRNA (guanine-N(7)-)-methyltransferase of Desulfitobacterium hafniense (strain Y51).